A 997-amino-acid chain; its full sequence is FHIP family protein CPIJ015043 (997 aa).

Disordered regions lie at residues 558 to 579 (DHRSSQCQSPAQQHLHQQQQLQ) and 759 to 922 (NVVL…GGAA). Residues 569–579 (QQHLHQQQQLQ) show a composition bias toward low complexity. Residues 763 to 780 (GGSGPGGPRLSNGGGGTG) are compositionally biased toward gly residues. 2 stretches are compositionally biased toward low complexity: residues 781–792 (SSITSSLSQTTP) and 830–889 (GSNS…MVGS). The span at 911-922 (IGSGTVGGGGAA) shows a compositional bias: gly residues.

This sequence belongs to the FHIP family.

The sequence is that of FHIP family protein CPIJ015043 from Culex quinquefasciatus (Southern house mosquito).